The chain runs to 110 residues: UPF0060 membrane protein Bcen_0802 (110 aa).

4 helical membrane-spanning segments follow: residues 9–29, 34–54, 66–86, and 88–108; these read ALFA…WLVL, PAWL…LLTL, YGGV…GVAL, and RWDV…ALQP.

The protein belongs to the UPF0060 family.

Its subcellular location is the cell inner membrane. The chain is UPF0060 membrane protein Bcen_0802 from Burkholderia orbicola (strain AU 1054).